We begin with the raw amino-acid sequence, 260 residues long: Protein TONNEAU 1a (260 aa).

A LisH domain is found at 73–105 (SGRLLSALICEYLDWAQLNHTLIVYQPESNLPK). 2 disordered regions span residues 147–224 (TQGM…EEVT) and 236–260 (DRKT…EGRD). Over residues 161-175 (ESSSSLESRNPPRRS) the composition is skewed to low complexity. The segment covering 248 to 260 (NVRDGTNEEEGRD) has biased composition (basic and acidic residues).

In terms of assembly, interacts with CEN1, LNG1/TRM2 and LNG2/TRM1 (via C-terminus).

It localises to the cytoplasm. Its subcellular location is the cytoskeleton. Involved in the control of the dynamic organization of the cortical cytoskeleton. May play a role in the organization of microtubule arrays at the centrosome through interaction with centrin 1 (CEN1). The protein is Protein TONNEAU 1a (TON1A) of Arabidopsis thaliana (Mouse-ear cress).